The sequence spans 286 residues: NAD(P)H azoreductase (286 aa).

NADP(+) contacts are provided by residues 6 to 11, Arg31, and 136 to 141; these read GGTGTI and GFFMQN.

Belongs to the NmrA-type oxidoreductase family. Azoreductase type 3 subfamily. In terms of assembly, monomer.

In terms of biological role, catalyzes the reductive cleavage of azo bond in aromatic azo compounds to the corresponding amines. Uses preferentially NADPH rather than NADH as an electron donor for its activity. The enzyme reductively cleaved Orange II and carboxy-Orange II, and can also reduce several sulfonated structural analogs, which carry a hydroxy group in the 2 position of the naphthol ring. In Xenophilus azovorans, this protein is NAD(P)H azoreductase (azoB).